Consider the following 588-residue polypeptide: Tripartite motif-containing protein 29 (588 aa).

The tract at residues 1 to 66 is disordered; sequence MEAADASRSN…GSALKPGEGR (66 aa). Phosphoserine is present on residues Ser21, Ser28, Ser58, and Ser104. Position 106 is a phosphotyrosine (Tyr106). A B box-type zinc finger spans residues 220 to 260; sequence FEARKCPVHGKTMELFCQTDQTCICYLCMFQEHKNHSTVTV. Zn(2+)-binding residues include Cys225, His228, Cys247, and His252. A coiled-coil region spans residues 259–352; it reads TVEEAKAEKE…VKVIMDALDE (94 aa). Residue Thr476 is modified to Phosphothreonine. Ser489 is modified (phosphoserine).

Interacts with VIM and HINT1. Interacts with IKBKG/NEMO. Interacts with STING1. In terms of processing, constitutively phosphorylated by PKC on serine/threonine in A431 cells. As to expression, expressed in placenta, prostate and thymus.

Its subcellular location is the cytoplasm. The protein localises to the lysosome. Its function is as follows. Plays a crucial role in the regulation of macrophage activation in response to viral or bacterial infections within the respiratory tract. Mechanistically, TRIM29 interacts with IKBKG/NEMO in the lysosome where it induces its 'Lys-48' ubiquitination and subsequent degradation. In turn, the expression of type I interferons and the production of pro-inflammatory cytokines are inhibited. Additionally, induces the 'Lys-48' ubiquitination of STING1 in a similar way, leading to its degradation. This chain is Tripartite motif-containing protein 29 (TRIM29), found in Homo sapiens (Human).